A 189-amino-acid chain; its full sequence is Translation machinery-associated protein 22 (189 aa).

Positions 94-165 constitute an SUI1 domain; the sequence is VTIKRIERNK…EAKDYIEKLL (72 aa).

It belongs to the DENR family. As to quaternary structure, interacts with the 40S ribosomal subunit.

The protein resides in the cytoplasm. This is Translation machinery-associated protein 22 (TMA22) from Debaryomyces hansenii (strain ATCC 36239 / CBS 767 / BCRC 21394 / JCM 1990 / NBRC 0083 / IGC 2968) (Yeast).